A 94-amino-acid polypeptide reads, in one-letter code: Co-chaperonin GroES (94 aa).

Belongs to the GroES chaperonin family. As to quaternary structure, heptamer of 7 subunits arranged in a ring. Interacts with the chaperonin GroEL.

The protein resides in the cytoplasm. In terms of biological role, together with the chaperonin GroEL, plays an essential role in assisting protein folding. The GroEL-GroES system forms a nano-cage that allows encapsulation of the non-native substrate proteins and provides a physical environment optimized to promote and accelerate protein folding. GroES binds to the apical surface of the GroEL ring, thereby capping the opening of the GroEL channel. The chain is Co-chaperonin GroES from Bacillus licheniformis (strain ATCC 14580 / DSM 13 / JCM 2505 / CCUG 7422 / NBRC 12200 / NCIMB 9375 / NCTC 10341 / NRRL NRS-1264 / Gibson 46).